The following is a 247-amino-acid chain: 2,3-bisphosphoglycerate-dependent phosphoglycerate mutase (247 aa).

Residues 8 to 15 (RHGESTWN), 21 to 22 (TG), Arg60, 87 to 90 (ERHY), Lys98, 114 to 115 (RR), and 183 to 184 (GN) each bind substrate. The active-site Tele-phosphohistidine intermediate is His9. Glu87 (proton donor/acceptor) is an active-site residue.

This sequence belongs to the phosphoglycerate mutase family. BPG-dependent PGAM subfamily. In terms of assembly, homodimer.

It catalyses the reaction (2R)-2-phosphoglycerate = (2R)-3-phosphoglycerate. Its pathway is carbohydrate degradation; glycolysis; pyruvate from D-glyceraldehyde 3-phosphate: step 3/5. Functionally, catalyzes the interconversion of 2-phosphoglycerate and 3-phosphoglycerate. The polypeptide is 2,3-bisphosphoglycerate-dependent phosphoglycerate mutase (Albidiferax ferrireducens (strain ATCC BAA-621 / DSM 15236 / T118) (Rhodoferax ferrireducens)).